The chain runs to 448 residues: Phosphoglucosamine mutase (448 aa).

Residue Ser-102 is the Phosphoserine intermediate of the active site. Mg(2+)-binding residues include Ser-102, Asp-243, Asp-245, and Asp-247. Phosphoserine is present on Ser-102.

It belongs to the phosphohexose mutase family. It depends on Mg(2+) as a cofactor. Post-translationally, activated by phosphorylation.

The enzyme catalyses alpha-D-glucosamine 1-phosphate = D-glucosamine 6-phosphate. Catalyzes the conversion of glucosamine-6-phosphate to glucosamine-1-phosphate. The protein is Phosphoglucosamine mutase of Parvibaculum lavamentivorans (strain DS-1 / DSM 13023 / NCIMB 13966).